The sequence spans 338 residues: Taste receptor type 2 member 39 (338 aa).

At 1 to 30 (MLGRCFPPDTKEKQQLRMTKLCDPAESELS) the chain is on the extracellular side. A helical transmembrane segment spans residues 31-51 (PFLITLILAVLLAEYLIGIIA). At 52–74 (NGFIMAIHAAEWVQNKAVSTSGR) the chain is on the cytoplasmic side. A helical membrane pass occupies residues 75-95 (ILVFLSVSRIALQSLMMLEIT). The Extracellular portion of the chain corresponds to 96 to 116 (ISSTSLSFYSEDAVYYAFKIS). Residues 117–137 (FIFLNFCSLWFAAWLSFFYFV) form a helical membrane-spanning segment. Topologically, residues 138-156 (KIANFSYPLFLKLRWRITG) are cytoplasmic. Residues 157 to 177 (LIPWLLWLSVFISFSHSMFCI) form a helical membrane-spanning segment. The Extracellular segment spans residues 178–205 (NIXTVYCNNSFPIHSSNSTKKTYLSEIN). N-linked (GlcNAc...) asparagine glycans are attached at residues Asn185 and Asn194. A helical membrane pass occupies residues 206 to 226 (VVGLAFFFNLGIVTPLIMFIL). Residues 227-262 (TATLLILSLKRHTLHMGSNATGSNDPSMEAHMGAIK) lie on the Cytoplasmic side of the membrane. A helical transmembrane segment spans residues 263-283 (ATSYFLILYIFNAVALFIYLS). Over 284-291 (NMFDINSL) the chain is Extracellular. Residues 292–312 (WNNLCQIIMAAYPASHSILLI) traverse the membrane as a helical segment. Topologically, residues 313–338 (QDNPGLRRAWKRLQLRLHLYPKEWTL) are cytoplasmic.

The protein belongs to the G-protein coupled receptor T2R family.

It is found in the membrane. Receptor that may play a role in the perception of bitterness and is gustducin-linked. May play a role in sensing the chemical composition of the gastrointestinal content. The activity of this receptor may stimulate alpha gustducin, mediate PLC-beta-2 activation and lead to the gating of TRPM5. The polypeptide is Taste receptor type 2 member 39 (TAS2R39) (Gorilla gorilla gorilla (Western lowland gorilla)).